We begin with the raw amino-acid sequence, 126 residues long: Fluoride-specific ion channel FluC (126 aa).

4 helical membrane passes run 4-24 (PLLSIALGSVLGAWLRWFLGL), 33-53 (IPLGTVTVNLVGGFIIGFAMA), 67-87 (FVITGFCGALTTFSTFSIEIV), and 97-117 (MAMLAISIHLIGSLIFTCLGL). The Na(+) site is built by G74 and T77.

The protein belongs to the fluoride channel Fluc/FEX (TC 1.A.43) family.

The protein localises to the cell inner membrane. The catalysed reaction is fluoride(in) = fluoride(out). Its activity is regulated as follows. Na(+) is not transported, but it plays an essential structural role and its presence is essential for fluoride channel function. Its function is as follows. Fluoride-specific ion channel. Important for reducing fluoride concentration in the cell, thus reducing its toxicity. The chain is Fluoride-specific ion channel FluC from Acinetobacter baumannii (strain SDF).